A 429-amino-acid chain; its full sequence is Glutamate-1-semialdehyde 2,1-aminomutase 2 (429 aa).

Lys268 bears the N6-(pyridoxal phosphate)lysine mark.

This sequence belongs to the class-III pyridoxal-phosphate-dependent aminotransferase family. HemL subfamily. Homodimer. It depends on pyridoxal 5'-phosphate as a cofactor.

The protein localises to the cytoplasm. It catalyses the reaction (S)-4-amino-5-oxopentanoate = 5-aminolevulinate. The protein operates within porphyrin-containing compound metabolism; protoporphyrin-IX biosynthesis; 5-aminolevulinate from L-glutamyl-tRNA(Glu): step 2/2. The sequence is that of Glutamate-1-semialdehyde 2,1-aminomutase 2 from Staphylococcus aureus (strain MSSA476).